The chain runs to 123 residues: MAITKDDILEAVANMSVMEVVELVEAMEEKFGVSAAAVAVAGPAGDAGAAGEEQTEFDVVLTGAGDNKVAAIKAVRGATGLGLKEAKSAVESAPFTLKEGVSKEEAETLANELKEAGIEVEVK.

Belongs to the bacterial ribosomal protein bL12 family. In terms of assembly, homodimer. Part of the ribosomal stalk of the 50S ribosomal subunit. Forms a multimeric L10(L12)X complex, where L10 forms an elongated spine to which 2 to 4 L12 dimers bind in a sequential fashion. Binds GTP-bound translation factors.

Functionally, forms part of the ribosomal stalk which helps the ribosome interact with GTP-bound translation factors. Is thus essential for accurate translation. This is Large ribosomal subunit protein bL12 from Hydrogenovibrio crunogenus (strain DSM 25203 / XCL-2) (Thiomicrospira crunogena).